The following is a 689-amino-acid chain: Glycine--tRNA ligase beta subunit (689 aa).

Belongs to the class-II aminoacyl-tRNA synthetase family. Tetramer of two alpha and two beta subunits.

It localises to the cytoplasm. The enzyme catalyses tRNA(Gly) + glycine + ATP = glycyl-tRNA(Gly) + AMP + diphosphate. This is Glycine--tRNA ligase beta subunit from Escherichia coli O8 (strain IAI1).